The primary structure comprises 127 residues: MQLPRVTLRQMTWTTSAIVLLGITLLLWSAFRHQESTLAIRAINQGTTMPDGFSVWHHLDANGIRFKSITPKNDTLLITFDSSAQSAAAKVVLDRTFPHGYIIAQQDEDNQASQWLSLLRDTSHRFG.

Over 1-9 (MQLPRVTLR) the chain is Cytoplasmic. A helical transmembrane segment spans residues 10-32 (QMTWTTSAIVLLGITLLLWSAFR). Residues 33-127 (HQESTLAIRA…LLRDTSHRFG (95 aa)) lie on the Periplasmic side of the membrane.

It belongs to the MzrA family. Interacts with EnvZ.

Its subcellular location is the cell inner membrane. In terms of biological role, modulates the activity of the EnvZ/OmpR two-component regulatory system, probably by directly modulating EnvZ enzymatic activity and increasing stability of phosphorylated OmpR. In Escherichia fergusonii (strain ATCC 35469 / DSM 13698 / CCUG 18766 / IAM 14443 / JCM 21226 / LMG 7866 / NBRC 102419 / NCTC 12128 / CDC 0568-73), this protein is Modulator protein MzrA.